We begin with the raw amino-acid sequence, 158 residues long: Large ribosomal subunit protein eL20z (158 aa).

This sequence belongs to the eukaryotic ribosomal protein eL20 family.

The protein is Large ribosomal subunit protein eL20z (RPL18A1) of Arabidopsis thaliana (Mouse-ear cress).